The sequence spans 310 residues: Protease HtpX homolog (310 aa).

2 helical membrane-spanning segments follow: residues 16–36 (NAVL…VDVI) and 55–75 (IFPT…VVCI). His-166 serves as a coordination point for Zn(2+). Glu-167 is an active-site residue. Zn(2+) is bound at residue His-170. 2 consecutive transmembrane segments (helical) span residues 182–202 (VGIL…FFMG) and 214–234 (MILL…QMYL). Position 239 (Glu-239) interacts with Zn(2+).

Belongs to the peptidase M48B family. It depends on Zn(2+) as a cofactor.

It is found in the cell inner membrane. In Helicobacter pylori (strain Shi470), this protein is Protease HtpX homolog.